Consider the following 438-residue polypeptide: Phosphoribosylamine--glycine ligase (438 aa).

One can recognise an ATP-grasp domain in the interval 108-316; it reads REFMERNNIP…LLEIAKGIVE (209 aa). An ATP-binding site is contributed by 135 to 194; sequence IDEYGKPVVVKPLGLTGGKGVKVVGYQLKDNEEAKEYAEHIIRKDGKVLIEERTDGVEFT. Mg(2+) is bound by residues Gln-274, Glu-286, and Asn-288. Positions 274, 286, and 288 each coordinate Mn(2+).

It belongs to the GARS family. Requires Mg(2+) as cofactor. Mn(2+) serves as cofactor.

The catalysed reaction is 5-phospho-beta-D-ribosylamine + glycine + ATP = N(1)-(5-phospho-beta-D-ribosyl)glycinamide + ADP + phosphate + H(+). Its pathway is purine metabolism; IMP biosynthesis via de novo pathway; N(1)-(5-phospho-D-ribosyl)glycinamide from 5-phospho-alpha-D-ribose 1-diphosphate: step 2/2. This is Phosphoribosylamine--glycine ligase from Pyrococcus horikoshii (strain ATCC 700860 / DSM 12428 / JCM 9974 / NBRC 100139 / OT-3).